Reading from the N-terminus, the 69-residue chain is uncharacterized protein (69 aa).

A signal peptide spans 1-21 (MNTKFILILLVLIISTIFVNS).

The protein resides in the secreted. This is an uncharacterized protein from Dictyostelium discoideum (Social amoeba).